The sequence spans 451 residues: Bifunctional protein GlmU (451 aa).

The pyrophosphorylase stretch occupies residues Met-1 to Lys-232. Residues Leu-11–Gly-14, Lys-25, Gln-78, and Gly-83–Thr-84 each bind UDP-N-acetyl-alpha-D-glucosamine. Residue Asp-108 participates in Mg(2+) binding. UDP-N-acetyl-alpha-D-glucosamine-binding residues include Gly-144, Glu-158, Asn-173, and Asn-230. Asn-230 provides a ligand contact to Mg(2+). Positions Ala-233–Ala-253 are linker. Residues Gly-254–Lys-451 form an N-acetyltransferase region. Arg-319 and Lys-337 together coordinate UDP-N-acetyl-alpha-D-glucosamine. The active-site Proton acceptor is the His-349. 2 residues coordinate UDP-N-acetyl-alpha-D-glucosamine: Tyr-352 and Asn-363. Acetyl-CoA is bound by residues Ala-366, Asn-372–Tyr-373, Ser-409, and Arg-426.

It in the N-terminal section; belongs to the N-acetylglucosamine-1-phosphate uridyltransferase family. In the C-terminal section; belongs to the transferase hexapeptide repeat family. As to quaternary structure, homotrimer. Requires Mg(2+) as cofactor.

The protein resides in the cytoplasm. It carries out the reaction alpha-D-glucosamine 1-phosphate + acetyl-CoA = N-acetyl-alpha-D-glucosamine 1-phosphate + CoA + H(+). It catalyses the reaction N-acetyl-alpha-D-glucosamine 1-phosphate + UTP + H(+) = UDP-N-acetyl-alpha-D-glucosamine + diphosphate. It functions in the pathway nucleotide-sugar biosynthesis; UDP-N-acetyl-alpha-D-glucosamine biosynthesis; N-acetyl-alpha-D-glucosamine 1-phosphate from alpha-D-glucosamine 6-phosphate (route II): step 2/2. Its pathway is nucleotide-sugar biosynthesis; UDP-N-acetyl-alpha-D-glucosamine biosynthesis; UDP-N-acetyl-alpha-D-glucosamine from N-acetyl-alpha-D-glucosamine 1-phosphate: step 1/1. The protein operates within bacterial outer membrane biogenesis; LPS lipid A biosynthesis. Its function is as follows. Catalyzes the last two sequential reactions in the de novo biosynthetic pathway for UDP-N-acetylglucosamine (UDP-GlcNAc). The C-terminal domain catalyzes the transfer of acetyl group from acetyl coenzyme A to glucosamine-1-phosphate (GlcN-1-P) to produce N-acetylglucosamine-1-phosphate (GlcNAc-1-P), which is converted into UDP-GlcNAc by the transfer of uridine 5-monophosphate (from uridine 5-triphosphate), a reaction catalyzed by the N-terminal domain. The polypeptide is Bifunctional protein GlmU (Bradyrhizobium diazoefficiens (strain JCM 10833 / BCRC 13528 / IAM 13628 / NBRC 14792 / USDA 110)).